A 421-amino-acid chain; its full sequence is MGFTTGREFHPALRMRAKYNAKYLGTKSEREKYFHLAYNKHTQFLRYQEQIMSKTKEKKVGVIFGKFYPVHTGHINMIYEAFSKVDELHVIVCSDTVRDLKLFYDSKMKRMPTVQDRLRWMQQIFKYQKNQIFIHHLVEDGIPSYPNGWQSWSEAVKTLFHEKHFEPSIVFSSEPQDKAPYEKYLGLEVSLVDPDRTFFNVSATKIRTTPFQYWKFIPKEARPFFAKTVAILGGESSGKSVLVNKLAAVFNTTSAWEYGREFVFEKLGGDEQAMQYSDYPQMALGHQRYIDYAVRHSHKIAFIDTDFITTQAFCIQYEGKAHPFLDSMIKEYPFDVTILLKNNTEWVDDGLRSLGSQKQRQQFQQLLKKLLDKYKVPYIEIESPSYLDRYNQVKAVIEKVLNEEEISELQNTTFPIKGTSQ.

The tract at residues 57–224 is nicotinamide mononucleotide adenylyltransferase; that stretch reads EKKVGVIFGK…KFIPKEARPF (168 aa). Residues 64 to 67, His-71, Arg-98, 139 to 152, 172 to 174, 199 to 201, 254 to 256, and 289 to 292 contribute to the NAD(+) site; these read FGKF, EDGI…WQSW, SSE, FNV, SAW, and YIDY. The interval 225 to 421 is ribosylnicotinamide kinase; sequence FAKTVAILGG…TTFPIKGTSQ (197 aa).

This sequence in the N-terminal section; belongs to the bacterial NMN adenylyltransferase family. The protein in the C-terminal section; belongs to the bacterial RNK family. In terms of assembly, homotetramer.

The protein resides in the cell membrane. It localises to the cytoplasm. The enzyme catalyses beta-nicotinamide D-ribonucleotide + ATP + H(+) = diphosphate + NAD(+). It catalyses the reaction beta-nicotinamide D-riboside + ATP = beta-nicotinamide D-ribonucleotide + ADP + H(+). Its pathway is cofactor biosynthesis; NAD(+) biosynthesis [regulation]. The protein operates within cofactor biosynthesis; NAD(+) biosynthesis; NAD(+) from nicotinamide D-ribonucleotide: step 1/1. Its activity is regulated as follows. Feed-back regulated by NAD. At high levels of NAD the RN kinase activity is inhibited. Its function is as follows. This enzyme has two activities: nicotinamide mononucleotide (NMN) adenylyltransferase and ribosylnicotinamide (RN) kinase. The RN kinase activity catalyzes the phosphorylation of RN to form nicotinamide ribonucleotide. The NMN adenylyltransferase activity catalyzes the transfer of the AMP moiety of ATP to nicotinamide ribonucleotide to form NAD(+). This chain is Bifunctional NAD biosynthesis protein NadR (nadR), found in Haemophilus influenzae (strain ATCC 51907 / DSM 11121 / KW20 / Rd).